A 247-amino-acid polypeptide reads, in one-letter code: Molybdate/tungstate transport system permease protein WtpB (247 aa).

The Cytoplasmic portion of the chain corresponds to 1 to 8; sequence MRRDYTLY. The chain crosses the membrane as a helical span at residues 9–29; the sequence is LFAALGTFLIAYIAVPIAVIF. Residues 30–55 lie on the Extracellular side of the membrane; the sequence is LKQASDVEMLVKTLHDPYVIEAIRNS. The ABC transmembrane type-1 domain maps to 52–238; sequence IRNSLLTATA…SLSLGIFVIL (187 aa). Residues 56–76 form a helical membrane-spanning segment; it reads LLTATATALIALLFGVPLGYV. The Cytoplasmic segment spans residues 77–90; it reads LARKDFPGKSAVQA. Residues 91–111 form a helical membrane-spanning segment; that stretch reads LVDVPIVIPHSVVGIMLLVTF. The Extracellular segment spans residues 112-114; it reads SNS. A helical transmembrane segment spans residues 115–135; sequence ILDSYKGIVAAMLFVSAPFTI. At 136–163 the chain is on the cytoplasmic side; it reads NAARDGFLAVDEKLEAVARTLGASRWRA. Residues 164–184 form a helical membrane-spanning segment; the sequence is FLSISLPMAFPSIASGAIMTW. The Extracellular portion of the chain corresponds to 185 to 222; the sequence is ARAISEVGAILIVAYYPKTAQVLILEYFNNYGLRASRP. A helical membrane pass occupies residues 223 to 243; it reads IAVIMVSLSLGIFVILRWLVG. The Cytoplasmic segment spans residues 244–247; that stretch reads RKNA.

The protein belongs to the binding-protein-dependent transport system permease family. In terms of assembly, the complex is composed of two ATP-binding proteins (WtpC), two transmembrane proteins (WtpB) and a solute-binding protein (WtpA).

Its subcellular location is the cell membrane. In terms of biological role, part of the ABC transporter complex WtpABC involved in molybdate/tungstate import. Probably responsible for the translocation of the substrate across the membrane. The chain is Molybdate/tungstate transport system permease protein WtpB (wtpB) from Thermococcus kodakarensis (strain ATCC BAA-918 / JCM 12380 / KOD1) (Pyrococcus kodakaraensis (strain KOD1)).